A 255-amino-acid chain; its full sequence is 5-oxoprolinase subunit A (255 aa).

This sequence belongs to the LamB/PxpA family. As to quaternary structure, forms a complex composed of PxpA, PxpB and PxpC.

The catalysed reaction is 5-oxo-L-proline + ATP + 2 H2O = L-glutamate + ADP + phosphate + H(+). Catalyzes the cleavage of 5-oxoproline to form L-glutamate coupled to the hydrolysis of ATP to ADP and inorganic phosphate. This chain is 5-oxoprolinase subunit A, found in Campylobacter jejuni subsp. jejuni serotype O:2 (strain ATCC 700819 / NCTC 11168).